The following is a 176-amino-acid chain: MEKAILGGGCFWCLEAAFSQLKGVERVVSGYCGGHTDSPDYRQVCSGDSGHVEVVEISYDPALIDYATLLQVFFAVHDPTTLNRQGHDVGTQYASAIFYLDETQRECARRVIAQLDAEQIFDAPIVTRVESAPRFHPAEDYHQNYYAQNQQQNYCQLVISPKLAKIRRRFSHLLQN.

The active site involves cysteine 10.

The protein belongs to the MsrA Met sulfoxide reductase family.

It carries out the reaction L-methionyl-[protein] + [thioredoxin]-disulfide + H2O = L-methionyl-(S)-S-oxide-[protein] + [thioredoxin]-dithiol. The enzyme catalyses [thioredoxin]-disulfide + L-methionine + H2O = L-methionine (S)-S-oxide + [thioredoxin]-dithiol. Has an important function as a repair enzyme for proteins that have been inactivated by oxidation. Catalyzes the reversible oxidation-reduction of methionine sulfoxide in proteins to methionine. The chain is Peptide methionine sulfoxide reductase MsrA from Chromobacterium violaceum (strain ATCC 12472 / DSM 30191 / JCM 1249 / CCUG 213 / NBRC 12614 / NCIMB 9131 / NCTC 9757 / MK).